A 335-amino-acid chain; its full sequence is Serpentine receptor class alpha-25 (335 aa).

5 helical membrane-spanning segments follow: residues 22–42 (IPVK…FYFA), 151–171 (LLII…YGVP), 195–215 (FRTV…YLSV), 245–265 (CILI…VNYI), and 280–300 (LAPF…VIYF).

Belongs to the nematode receptor-like protein sra family.

It is found in the membrane. This is Serpentine receptor class alpha-25 (sra-25) from Caenorhabditis elegans.